The primary structure comprises 777 residues: MNTKILETLEFSKIKELFAPYLLTEQGQLELGLLLPTSKKETVVSAFLEMTDMQQIFVQHPHFSLAATQDITALTKRLELESDLNIEEFLALKRVLAVTQELKSFYEDLENVHLEKLDRLFDNLAVFPKLQGSLQAVNDGGFIESFASESLSRIRRKIQENENQVREILQEILKNKGEMLADQVVASRNGRNVLPVKNTYRNRISGVVHDISASGNTVYIEPRAVVNLNEEIASSRADERYEIQRILQELSDLFRPHAAEIANNAWIIGHLDLVRAKVRFMQETGAVVPDLSEEQDIQLLSVRHPLIENAVANDLHFGLDLTEIVITGPNTGGKTIMLKTLGLAQIMAQSGLPILADKGSRVGIFSQIFADIGDEQSIEQSLSTFSSHMTNIVSILEQVDSESLVLLDELGAGTDPQEGAALAIAILEDLRLRQIKTMATTHYPELKAYGIETDWVENASMEFDTDSLRPTYRFMQGVPGRSNAFEIAQRLGLSEVIVGHAQEQTDTDSDVNRIIERLEEQTLESRKRLDNIREVEQENLKFNRALKKLYNEFNREKETELNKARLEAQEIVDLALSESESILKNLHDKSSLKPHEIIEAKAQLKKLAPETVDLSKNKVLKQAKKNRAPKVGDDILVTSYGQRGTLVKQLKDGRWEAQVGLIKMTLEEQEFNLLKAEKEQQPKRKQVNVVKRANTAGPKARLDLRGKRYEEAMEELDAFIDQALLNNMAQVDIIHGIGTGVIREGVTKYLRRNKHVKSFGYAPQNAGGSGATIVIFK.

Residue 328–335 coordinates ATP; sequence GPNTGGKT. The 76-residue stretch at 702–777 folds into the Smr domain; it reads LDLRGKRYEE…GSGATIVIFK (76 aa).

It belongs to the DNA mismatch repair MutS family. MutS2 subfamily. As to quaternary structure, homodimer. Binds to stalled ribosomes, contacting rRNA.

In terms of biological role, endonuclease that is involved in the suppression of homologous recombination and thus may have a key role in the control of bacterial genetic diversity. Its function is as follows. Acts as a ribosome collision sensor, splitting the ribosome into its 2 subunits. Detects stalled/collided 70S ribosomes which it binds and splits by an ATP-hydrolysis driven conformational change. Acts upstream of the ribosome quality control system (RQC), a ribosome-associated complex that mediates the extraction of incompletely synthesized nascent chains from stalled ribosomes and their subsequent degradation. Probably generates substrates for RQC. This is Endonuclease MutS2 from Streptococcus sanguinis (strain SK36).